Here is a 729-residue protein sequence, read N- to C-terminus: Alpha-galactosidase AgaA (729 aa).

Substrate contacts are provided by residues aspartate 53, tryptophan 199, 366-367 (DD), arginine 443, 476-480 (KWDMN), cysteine 526, and aspartate 548. The active-site Nucleophile is aspartate 478. Aspartate 548 acts as the Proton donor in catalysis.

Belongs to the glycosyl hydrolase 36 family. Homotetramer.

It catalyses the reaction Hydrolysis of terminal, non-reducing alpha-D-galactose residues in alpha-D-galactosides, including galactose oligosaccharides, galactomannans and galactolipids.. Its activity is regulated as follows. Not inhibited by D-galactose or sucrose. Inhibited by pharmaceutical drug 1-deoxygalactonojirimycin. Functionally, hydrolyzes the short-chain alpha-galactosaccharides raffinose and stachyose. The sequence is that of Alpha-galactosidase AgaA from Geobacillus stearothermophilus (Bacillus stearothermophilus).